The primary structure comprises 96 residues: uncharacterized protein (96 aa).

The tract at residues Ser35–Lys96 is disordered. Basic and acidic residues predominate over residues Gly38–Lys52. Polar residues predominate over residues Ala69–Leu80.

This is an uncharacterized protein from Dictyostelium discoideum (Social amoeba).